Reading from the N-terminus, the 55-residue chain is Riparin-1.5 acid (55 aa).

The N-terminal stretch at 1 to 15 (MKIIVFLAVLMLVSA) is a signal peptide. A propeptide spanning residues 16–41 (QVCLVSAAEMEHSSDNELSSRDLVKR) is cleaved from the precursor. Cys47 and Cys53 are disulfide-bonded. The propeptide occupies 54 to 55 (NH).

Expressed by the skin glands.

The protein resides in the secreted. This Crinia riparia (Streambank froglet) protein is Riparin-1.5 acid.